Here is a 113-residue protein sequence, read N- to C-terminus: Iron-sulfur cluster insertion protein ErpA (113 aa).

The iron-sulfur cluster site is built by Cys-41, Cys-105, and Cys-107.

This sequence belongs to the HesB/IscA family. In terms of assembly, homodimer. The cofactor is iron-sulfur cluster.

Its function is as follows. Required for insertion of 4Fe-4S clusters for at least IspG. The polypeptide is Iron-sulfur cluster insertion protein ErpA (Aliivibrio salmonicida (strain LFI1238) (Vibrio salmonicida (strain LFI1238))).